Reading from the N-terminus, the 295-residue chain is Probable endonuclease 4 (295 aa).

The Zn(2+) site is built by His78, His118, Glu154, Asp188, His191, His225, Asp238, His240, and Glu270.

It belongs to the AP endonuclease 2 family. The cofactor is Zn(2+).

The enzyme catalyses Endonucleolytic cleavage to 5'-phosphooligonucleotide end-products.. Functionally, endonuclease IV plays a role in DNA repair. It cleaves phosphodiester bonds at apurinic or apyrimidinic (AP) sites, generating a 3'-hydroxyl group and a 5'-terminal sugar phosphate. The polypeptide is Probable endonuclease 4 (Vibrio parahaemolyticus serotype O3:K6 (strain RIMD 2210633)).